The sequence spans 234 residues: Leucyl/phenylalanyl-tRNA--protein transferase (234 aa).

This sequence belongs to the L/F-transferase family.

The protein resides in the cytoplasm. The enzyme catalyses N-terminal L-lysyl-[protein] + L-leucyl-tRNA(Leu) = N-terminal L-leucyl-L-lysyl-[protein] + tRNA(Leu) + H(+). It carries out the reaction N-terminal L-arginyl-[protein] + L-leucyl-tRNA(Leu) = N-terminal L-leucyl-L-arginyl-[protein] + tRNA(Leu) + H(+). It catalyses the reaction L-phenylalanyl-tRNA(Phe) + an N-terminal L-alpha-aminoacyl-[protein] = an N-terminal L-phenylalanyl-L-alpha-aminoacyl-[protein] + tRNA(Phe). In terms of biological role, functions in the N-end rule pathway of protein degradation where it conjugates Leu, Phe and, less efficiently, Met from aminoacyl-tRNAs to the N-termini of proteins containing an N-terminal arginine or lysine. In Escherichia coli O81 (strain ED1a), this protein is Leucyl/phenylalanyl-tRNA--protein transferase.